The primary structure comprises 646 residues: Type III restriction-modification enzyme EcoPI Mod subunit (646 aa).

Residues 123–126 (DPPY) are binding of S-adenosyl methionine.

It belongs to the N(4)/N(6)-methyltransferase family. As to quaternary structure, homodimer. A heterotetramer with stoichiometry Res(2)Mod(2).

It carries out the reaction a 2'-deoxyadenosine in DNA + S-adenosyl-L-methionine = an N(6)-methyl-2'-deoxyadenosine in DNA + S-adenosyl-L-homocysteine + H(+). In terms of biological role, a beta subtype methylase that binds the system-specific DNA recognition site 5'-AGACC-3' and methylates A-3 (of only 1 strand as the other does not have an A residue). DNA restriction requires both the Res and Mod subunits. The sequence is that of Type III restriction-modification enzyme EcoPI Mod subunit from Enterobacteriaceae (Bacteriophage P1).